The following is a 180-amino-acid chain: Adenine phosphoribosyltransferase (180 aa).

This sequence belongs to the purine/pyrimidine phosphoribosyltransferase family. As to quaternary structure, homodimer.

Its subcellular location is the cytoplasm. The enzyme catalyses AMP + diphosphate = 5-phospho-alpha-D-ribose 1-diphosphate + adenine. The protein operates within purine metabolism; AMP biosynthesis via salvage pathway; AMP from adenine: step 1/1. In terms of biological role, catalyzes a salvage reaction resulting in the formation of AMP, that is energically less costly than de novo synthesis. In Marinobacter nauticus (strain ATCC 700491 / DSM 11845 / VT8) (Marinobacter aquaeolei), this protein is Adenine phosphoribosyltransferase.